The sequence spans 675 residues: PTS system glucose-specific EIICBA component (675 aa).

A PTS EIIC type-1 domain is found at 3 to 414; that stretch reads KKLFGQLQRI…FNFKTPGRED (412 aa). 11 consecutive transmembrane segments (helical) span residues 16 to 36, 59 to 79, 81 to 101, 126 to 146, 173 to 193, 199 to 219, 273 to 293, 303 to 323, 328 to 348, 355 to 375, and 378 to 398; these read LMLP…GTAF, MMTG…ALGV, IGLA…FIIM, VLGI…GALA, IMMA…WPFI, AFST…FGFI, FMQG…LAIY, VVGG…ITEP, FLFV…LSFL, LHLG…GILP, and TPWW…YVVF. One can recognise a PTS EIIB type-1 domain in the interval 425–506; the sequence is SKLPFDVLDA…ARIMNGDITK (82 aa). Residue cysteine 447 is the Phosphocysteine intermediate; for EIIB activity of the active site. One can recognise a PTS EIIA type-1 domain in the interval 547-651; sequence DKVFSEKMMG…SVVTPVIITN (105 aa). Catalysis depends on histidine 599, which acts as the Tele-phosphohistidine intermediate; for EIIA activity.

It is found in the cell membrane. It carries out the reaction N(pros)-phospho-L-histidyl-[protein] + D-glucose(out) = D-glucose 6-phosphate(in) + L-histidyl-[protein]. The phosphoenolpyruvate-dependent sugar phosphotransferase system (sugar PTS), a major carbohydrate active transport system, catalyzes the phosphorylation of incoming sugar substrates concomitantly with their translocation across the cell membrane. This system is involved in glucose transport. This is PTS system glucose-specific EIICBA component (ptsG) from Staphylococcus haemolyticus (strain JCSC1435).